The chain runs to 454 residues: UPF0210 protein BLA_0552 (454 aa).

This sequence belongs to the UPF0210 family. As to quaternary structure, homodimer.

In Bifidobacterium animalis subsp. lactis (strain AD011), this protein is UPF0210 protein BLA_0552.